A 387-amino-acid chain; its full sequence is Protein RecA (387 aa).

Residue 80–87 coordinates ATP; that stretch reads GPESSGKT. The tract at residues 348–387 is disordered; sequence LDDSEVAETEEETTASKTKAKAKKEEKAVETEEIELELED. Composition is skewed to acidic residues over residues 349–360 and 378–387; these read DDSEVAETEEET and TEEIELELED.

This sequence belongs to the RecA family.

The protein localises to the cytoplasm. Its function is as follows. Can catalyze the hydrolysis of ATP in the presence of single-stranded DNA, the ATP-dependent uptake of single-stranded DNA by duplex DNA, and the ATP-dependent hybridization of homologous single-stranded DNAs. It interacts with LexA causing its activation and leading to its autocatalytic cleavage. In Lactococcus lactis subsp. cremoris (strain MG1363), this protein is Protein RecA.